The sequence spans 556 residues: MLSDIEIAQRAKVWPIAKVAVKLGIKKSQIELYGHYKAKLSFDCIKKLQKKPDGNLILVTAISPTAAGEGKSTTTVGLAQALAKIGKKAIVALREPSLGPCMGIKGGAAGGGYSQVVPMEDINLHFTGDMHAITAANNLLSAIIDNHIHQGNELGIDERRIVWHRVVDINDRALRNIVVALGGKGNGFPREDSFDITVASEVMAILCLSESLADLKKRLSKVIVGYNFADKPVTAGMLKAEGAMAALLKDAIKPNLVQTLENVPAIIHGGPFANIAHGCNSVIATKTALKLADYIVTEAGFGADLGAEKFFNIKCRYAGLTPKVAIIVATVRALKMHGGVSKDKLTHLDKQAVIRGLVNLDKHIENVKKFGVPPVVAINIFSGDSKEEIAAVKAHCKKIGVPVELSDVFAKGGEGGIQLAKKVVDIISKNKSKFRFTYESEDSLEEKTKKIVKNIYGAKDVFFDKKALDSIKKYEAMGFGNIPVCMAKTQYSFSDNPKLYGRPEGFTIEVREARISAGAGFVVMLTGNIMTMPGLPKFPAAEKIDISSEGVIKGLS.

65–72 is an ATP binding site; the sequence is TAAGEGKS.

The protein belongs to the formate--tetrahydrofolate ligase family.

It catalyses the reaction (6S)-5,6,7,8-tetrahydrofolate + formate + ATP = (6R)-10-formyltetrahydrofolate + ADP + phosphate. Its pathway is one-carbon metabolism; tetrahydrofolate interconversion. This chain is Formate--tetrahydrofolate ligase, found in Elusimicrobium minutum (strain Pei191).